A 398-amino-acid polypeptide reads, in one-letter code: 4-hydroxy-3-methylbut-2-enyl diphosphate reductase (398 aa).

A [4Fe-4S] cluster-binding site is contributed by cysteine 66. Histidine 96 contacts (2E)-4-hydroxy-3-methylbut-2-enyl diphosphate. Histidine 96 lines the dimethylallyl diphosphate pocket. Residue histidine 96 coordinates isopentenyl diphosphate. Cysteine 157 contributes to the [4Fe-4S] cluster binding site. Histidine 185 contacts (2E)-4-hydroxy-3-methylbut-2-enyl diphosphate. Position 185 (histidine 185) interacts with dimethylallyl diphosphate. Histidine 185 provides a ligand contact to isopentenyl diphosphate. Residue glutamate 187 is the Proton donor of the active site. Position 250 (threonine 250) interacts with (2E)-4-hydroxy-3-methylbut-2-enyl diphosphate. A [4Fe-4S] cluster-binding site is contributed by cysteine 288. Residues serine 317, serine 318, asparagine 319, and serine 379 each coordinate (2E)-4-hydroxy-3-methylbut-2-enyl diphosphate. Dimethylallyl diphosphate is bound by residues serine 317, serine 318, asparagine 319, and serine 379. Isopentenyl diphosphate-binding residues include serine 317, serine 318, asparagine 319, and serine 379.

Belongs to the IspH family. The cofactor is [4Fe-4S] cluster.

The catalysed reaction is isopentenyl diphosphate + 2 oxidized [2Fe-2S]-[ferredoxin] + H2O = (2E)-4-hydroxy-3-methylbut-2-enyl diphosphate + 2 reduced [2Fe-2S]-[ferredoxin] + 2 H(+). It carries out the reaction dimethylallyl diphosphate + 2 oxidized [2Fe-2S]-[ferredoxin] + H2O = (2E)-4-hydroxy-3-methylbut-2-enyl diphosphate + 2 reduced [2Fe-2S]-[ferredoxin] + 2 H(+). It functions in the pathway isoprenoid biosynthesis; dimethylallyl diphosphate biosynthesis; dimethylallyl diphosphate from (2E)-4-hydroxy-3-methylbutenyl diphosphate: step 1/1. The protein operates within isoprenoid biosynthesis; isopentenyl diphosphate biosynthesis via DXP pathway; isopentenyl diphosphate from 1-deoxy-D-xylulose 5-phosphate: step 6/6. Functionally, catalyzes the conversion of 1-hydroxy-2-methyl-2-(E)-butenyl 4-diphosphate (HMBPP) into a mixture of isopentenyl diphosphate (IPP) and dimethylallyl diphosphate (DMAPP). Acts in the terminal step of the DOXP/MEP pathway for isoprenoid precursor biosynthesis. The chain is 4-hydroxy-3-methylbut-2-enyl diphosphate reductase from Synechococcus sp. (strain CC9311).